The sequence spans 177 residues: Large ribosomal subunit protein uL6 (177 aa).

The protein belongs to the universal ribosomal protein uL6 family. In terms of assembly, part of the 50S ribosomal subunit.

In terms of biological role, this protein binds to the 23S rRNA, and is important in its secondary structure. It is located near the subunit interface in the base of the L7/L12 stalk, and near the tRNA binding site of the peptidyltransferase center. This is Large ribosomal subunit protein uL6 from Rhodospirillum rubrum (strain ATCC 11170 / ATH 1.1.1 / DSM 467 / LMG 4362 / NCIMB 8255 / S1).